We begin with the raw amino-acid sequence, 1802 residues long: MASSLAAQLSQIAANSTNQLNLKAQRISHSQSLIFDRKVAGSQDFDTIYDICNEGFQELCELDPRFAQFERTIFSEQSKVQERTEMNAAQNKELDAVLETFLALVGGKLLLSPAVKAVEWLVRRFRIHEYNTEFTILTFLPYHTTPLFLNLLSILPEDLTPTFKILNPYKKSSVNPPRHPLVHSATTNKPFFAALNRYTIQVSKEQAGHHALLTFWAGIVTESVAGMLDSARSGRRNIEKENHDDIIMRVLPVLNDGLAMKDVAELVIGCYMVCVAIAQKASLHDKVLDSLMEAVAESWTEETVNSGLVCLAVLAQKKPDTTLPKRVFKAILRLENPLQQLSETSKQHRASQLLLGLVAGCVQDLSKQKDTARLDFLSLMFESELLGEAELGSGMAIVLRASSNSHKDGAMSLDAQTHLADLVQHFSRSESLRPIFQKTVAESSFDIVAIEQNLQTVIESAPAPKALEDIEMEDAEKEEEQDNFAPALKSLTGSSFKGSYLSTQSIPVYDNLVRAFALGIGAQEKLDAFANLPALDKGNAAKSPQYLSFFVRVFSGSYPIGTRVAALNMVSSFLTTASIDMDLQALLPFVLVTLADPSERVRREAAGILTIIGSLHKNKKGDAPGGVWARDTIYGQDKQPKNIQWTPGRDLQKVFERALLPGLEEYVIDPDHIGRVLEATLRGSSVSDSESSELKKAVRLSFFTCLCSHAVHVPLYAPKLGLLKLLNRVEKAGGTTRTKELGSLLKSWREMDGQQAKDVCEKERVPVSEMESQIVLTVTPKERDAITVLLSNVSPYSGSLSPSFVGAIFGRMKDVWAKVPEDRQALAAENLFEISLEQSDSPLVDGCKDVLRSVELPGAVLSQFLQKIPSTVTDMEGLGPAPKRRRTSQSNMVAMTVKDEAALSELMEKMTFILELVDSSSPETHPELADGLFQTLAALHHFKSQVQSGMSYLLSLALGSLLAIVNRSKTIGKPQFDTSVIRADLVVDCVRTTDSPQVQNAALLLVAGLSVIAPELVLHSVMPIFTFMGSSVLKKDDDYSVSVIDQTIDQVVPALIQSLRNQKRDVVSGTSELLLSFTAAFEHIPSHRRLRLFHALITKLGTQDFLFAVLSMLANRYSMDKDVLILMTGLVSDANAPVELATYSKYLGLVSDSLKAKPGISQVLLGIGSDDGREPQKVAVDLLRALAYLFRHSSLKSKMAKAFAIVEGDEPQQIRALFSQILEQTLAIGDNMQDMKSVGQASGEVLSALFGTLSLVDFLDTIEVLLQRPNDELRRKVLRLLEGRLRQNPERDSPSQTRMLDFLSVLVKIVESSPDILLKHAAVACIDRIADKYGKKDPSKVIPAARVVASEVCIGQEDDRIRIMGVLCLASMAEVLGQAMIPALPDTLSRSLALLGLSLEDGKENTRLHDAVYSLFSALFVHLPYMISASHLDKVLVLSYKSAMNDEFEEESRQEALRLMAKKVDASATFGAVDRNWQHAVQAGPEATKETLEVVSMAIEKHPKSSTAKNLPVITNILFKAFDLRREQLALGSDATFDLSDVDEIEETINEVTIKMIYKLNDSTFRPIFTKLLEWATTGVSKKDTQGSLARHTTFYKFLQVFFGTLQSIVTGYASYIIENVVSVLSKASPSNPNTKSLWLATMRLLKNAFEHDQDEFWQSPSHLTKIATPLISQLAHATHPTTATLVINEAIPAITELAVAADSTDNHKELNTVLMRYLRPSAGPTGKAAGGENPHTRLAALKTEQSLTEQLGEEWLALLPEMLPYISELMEDEDENVEKEVRKWVKQIEDVLGEKLDDMLT.

One copy of the HEAT 1 repeat lies at 581–618 (MDLQALLPFVLVTLADPSERVRREAAGILTIIGSLHKN). The next 2 helical transmembrane spans lie at 946 to 966 (VQSG…AIVN) and 1002 to 1022 (ALLL…HSVM). 4 HEAT repeats span residues 1046–1083 (QTID…AFEH), 1253–1290 (LSLV…QNPE), 1297–1335 (TRML…KYGK), and 1758–1795 (ALLP…VLGE).

This sequence belongs to the HEATR1/UTP10 family. Component of the ribosomal small subunit (SSU) processome.

Its subcellular location is the nucleus. The protein resides in the nucleolus. The protein localises to the membrane. Its function is as follows. Involved in nucleolar processing of pre-18S ribosomal RNA. Involved in ribosome biosynthesis. The sequence is that of U3 small nucleolar RNA-associated protein 10 from Aspergillus oryzae (strain ATCC 42149 / RIB 40) (Yellow koji mold).